The following is a 423-amino-acid chain: Acyl-coenzyme A diphosphatase FITM2 (423 aa).

Residues 1-47 (MATKRRPLRPNLGGTAGSPSSSGSNMNFRPGGPDITRSEARGTRPTA) form a disordered region. At 1–75 (MATKRRPLRP…KTIFFNTDLK (75 aa)) the chain is on the cytoplasmic side. A helical membrane pass occupies residues 76-96 (VALYLGSLFVISVIGDFVPFP). At 97-113 (KTYFARSDNLFNQYFVK) the chain is on the lumenal side. The chain crosses the membrane as a helical span at residues 114–134 (IGWGWTLLFVVPFLVLSAYTI). The Cytoplasmic segment spans residues 135–146 (TCGDHKRMLRHH). Residues 147–167 (FPRIVIATFFWFFWTKLFNVV) form a helical membrane-spanning segment. The Lumenal portion of the chain corresponds to 168–191 (ENSYGRCTTKGYATKSSCLKAGHL). The chain crosses the membrane as a helical span at residues 192–212 (WKGFDISGHAFILIHSSLVLI). The active site involves histidine 200. Residues 213-270 (EEARPIIRWETIKEHIRNERHNRSTAENSGTNPLRTLNEEQMRSLQFLYKRLTPIIRT) are Cytoplasmic-facing. Residues 271 to 291 (LFIGMAALQLLWDIMLVGTML) traverse the membrane as a helical segment. Residues 292–299 (YYHRMIEK) lie on the Lumenal side of the membrane. Residue histidine 294 is part of the active site. Residues 300–320 (VISGIIAILTWYFTYRFWYPT) form a helical membrane-spanning segment. Residues 321–423 (PGLLPEAPGN…RDREQQTLES (103 aa)) are Cytoplasmic-facing. Disordered regions lie at residues 344–381 (FKRPSHLSTGAATTSSGSNSSRTNLNGKAATTGVPRDQ) and 400–423 (AAANLLMSDQQKRERDREQQTLES). The segment covering 351-367 (STGAATTSSGSNSSRTN) has biased composition (low complexity). Over residues 409–423 (QQKRERDREQQTLES) the composition is skewed to basic and acidic residues.

Belongs to the FIT family. FIT2 subfamily.

It is found in the endoplasmic reticulum membrane. The enzyme catalyses an acyl-CoA + H2O = an acyl-4'-phosphopantetheine + adenosine 3',5'-bisphosphate + 2 H(+). Its function is as follows. Fatty acyl-coenzyme A (CoA) diphosphatase that hydrolyzes fatty acyl-CoA to yield acyl-4'-phosphopantetheine and adenosine 3',5'-bisphosphate. Preferentially hydrolyzes unsaturated long-chain acyl-CoA substrates in the endoplasmic reticulum (ER) lumen. This catalytic activity is required for maintaining ER structure and for lipid droplets (LDs) biogenesis, which are lipid storage organelles involved in maintaining lipid and energy homeostasis. May directly bind to diacylglycerol (DAGs) and triacylglycerol, which is also important for LD biogenesis. May support directional budding of nacent LDs from the ER into the cytosol by reducing DAG levels at sites of LD formation. Plays a role in the regulation of cell morphology and cytoskeletal organization. Required for correct morphology of nociceptive multi-dendritic sensory neurons. Required for normal mechanical amplification in hearing. This Drosophila melanogaster (Fruit fly) protein is Acyl-coenzyme A diphosphatase FITM2.